A 189-amino-acid chain; its full sequence is Auxin-induced protein IAA4 (189 aa).

An EAR-like (transcriptional repression) motif is present at residues 8 to 12 (LRLGL). One can recognise a PB1 domain in the interval 92 to 179 (GIFVKVSMDG…SCKRLRIMKG (88 aa)).

This sequence belongs to the Aux/IAA family. Homodimers and heterodimers. Post-translationally, phosphorylated by phytochrome A in vitro.

Its subcellular location is the nucleus. Its function is as follows. Aux/IAA proteins are short-lived transcriptional factors that function as repressors of early auxin response genes at low auxin concentrations. Repression is thought to result from the interaction with auxin response factors (ARFs), proteins that bind to the auxin-responsive promoter element (AuxRE). Formation of heterodimers with ARF proteins may alter their ability to modulate early auxin response genes expression. The chain is Auxin-induced protein IAA4 (IAA4/5) from Pisum sativum (Garden pea).